The primary structure comprises 197 residues: dITP/XTP pyrophosphatase (197 aa).

10-15 (TKNQGK) provides a ligand contact to substrate. Residue Asp-70 is the Proton acceptor of the active site. Residue Asp-70 coordinates Mg(2+). Residues Ser-71, 151-154 (FGYD), Lys-173, and 178-179 (HR) contribute to the substrate site.

Belongs to the HAM1 NTPase family. As to quaternary structure, homodimer. It depends on Mg(2+) as a cofactor.

The enzyme catalyses XTP + H2O = XMP + diphosphate + H(+). It carries out the reaction dITP + H2O = dIMP + diphosphate + H(+). The catalysed reaction is ITP + H2O = IMP + diphosphate + H(+). Its function is as follows. Pyrophosphatase that catalyzes the hydrolysis of nucleoside triphosphates to their monophosphate derivatives, with a high preference for the non-canonical purine nucleotides XTP (xanthosine triphosphate), dITP (deoxyinosine triphosphate) and ITP. Seems to function as a house-cleaning enzyme that removes non-canonical purine nucleotides from the nucleotide pool, thus preventing their incorporation into DNA/RNA and avoiding chromosomal lesions. The chain is dITP/XTP pyrophosphatase from Symbiobacterium thermophilum (strain DSM 24528 / JCM 14929 / IAM 14863 / T).